The chain runs to 824 residues: Probable acyl-CoA dehydrogenase IBR3 (824 aa).

The residue at position 2 (glycine 2) is an N-acetylglycine. FAD-binding positions include 555–565 (FAMTEPQVASS), 589–591 (WTS), arginine 706, glutamine 776, and 776–780 (QVHGA). The Microbody targeting signal signature appears at 822–824 (SKL).

Belongs to the acyl-CoA dehydrogenase family. The cofactor is FAD.

Its subcellular location is the peroxisome. The catalysed reaction is a 2,3-saturated acyl-CoA + A = a 2,3-dehydroacyl-CoA + AH2. Functionally, involved with IBR1 and IBR10 in the peroxisomal beta-oxidation of indole-3-butyric acid (IBA) to form indole-3-acetic acid (IAA), a biologically active auxin. May be responsible for catalyzing the first step in IBA-CoA beta-oxidation. May play a role in defense response to pathogenic bacteria. This is Probable acyl-CoA dehydrogenase IBR3 from Arabidopsis thaliana (Mouse-ear cress).